Reading from the N-terminus, the 110-residue chain is UPF0060 membrane protein Bpet0062 (110 aa).

A run of 4 helical transmembrane segments spans residues 7 to 27, 33 to 53, 63 to 83, and 86 to 106; these read LGLF…PYLW, SAWL…LLTL, AAYG…VDGV, and ATTD…IMAG.

The protein belongs to the UPF0060 family.

Its subcellular location is the cell inner membrane. The protein is UPF0060 membrane protein Bpet0062 of Bordetella petrii (strain ATCC BAA-461 / DSM 12804 / CCUG 43448).